We begin with the raw amino-acid sequence, 356 residues long: WAT1-related protein At1g68170 (356 aa).

10 helical membrane-spanning segments follow: residues 4-24 (ITAM…FKLA), 33-53 (VLVA…CFIF), 65-85 (LMLL…ILTI), 94-114 (TFTS…AALL), 125-145 (VGLA…VFIF), 176-196 (ISIL…LWFL), 210-230 (WNAT…ALCW), 245-265 (LLTI…VNAW), 273-293 (LFVS…GSFL), and 298-318 (LHLG…IVLW). 2 EamA domains span residues 14–142 (TAGL…GALV) and 191–317 (ISLW…YIVL).

Belongs to the drug/metabolite transporter (DMT) superfamily. Plant drug/metabolite exporter (P-DME) (TC 2.A.7.4) family.

The protein localises to the membrane. This chain is WAT1-related protein At1g68170, found in Arabidopsis thaliana (Mouse-ear cress).